A 124-amino-acid chain; its full sequence is Basic leucine zipper transcriptional factor ATF-like (124 aa).

Over residues 1–23 the composition is skewed to polar residues; the sequence is MAQGSDNNDTSYTKSPSPGNKQG. The disordered stretch occupies residues 1–60; sequence MAQGSDNNDTSYTKSPSPGNKQGSSDDMRKVMRREKNRIAAQKSRMRQTQKADSLHLESE. The region spanning 27 to 90 is the bZIP domain; that stretch reads DMRKVMRREK…KYLSTVLSNH (64 aa). Residues 29 to 51 form a basic motif region; sequence RKVMRREKNRIAAQKSRMRQTQK. The tract at residues 55-83 is leucine-zipper; sequence LHLESESLEKENAALRKEVKRLTEEAKYL.

The protein belongs to the bZIP family.

Its subcellular location is the nucleus. The protein resides in the cytoplasm. In terms of biological role, AP-1 family transcription factor that controls the differentiation of lineage-specific cells in the immune system: specifically mediates the differentiation of T-helper 17 cells (Th17), follicular T-helper cells (TfH), CD8(+) dendritic cells and class-switch recombination (CSR) in B-cells. The polypeptide is Basic leucine zipper transcriptional factor ATF-like (batf) (Danio rerio (Zebrafish)).